Here is a 206-residue protein sequence, read N- to C-terminus: Outer-membrane lipoprotein carrier protein (206 aa).

A signal peptide spans 1–21 (MTRLLFVLVLSVCLLPVPVKA).

The protein belongs to the LolA family. In terms of assembly, monomer.

It localises to the periplasm. Functionally, participates in the translocation of lipoproteins from the inner membrane to the outer membrane. Only forms a complex with a lipoprotein if the residue after the N-terminal Cys is not an aspartate (The Asp acts as a targeting signal to indicate that the lipoprotein should stay in the inner membrane). This is Outer-membrane lipoprotein carrier protein from Nitrosomonas europaea (strain ATCC 19718 / CIP 103999 / KCTC 2705 / NBRC 14298).